Here is a 425-residue protein sequence, read N- to C-terminus: Serine hydroxymethyltransferase (425 aa).

Residues L124 and 128 to 130 (GHL) each bind (6S)-5,6,7,8-tetrahydrofolate. An N6-(pyridoxal phosphate)lysine modification is found at K233.

Belongs to the SHMT family. As to quaternary structure, homodimer. Requires pyridoxal 5'-phosphate as cofactor.

The protein resides in the cytoplasm. The enzyme catalyses (6R)-5,10-methylene-5,6,7,8-tetrahydrofolate + glycine + H2O = (6S)-5,6,7,8-tetrahydrofolate + L-serine. It participates in one-carbon metabolism; tetrahydrofolate interconversion. Its pathway is amino-acid biosynthesis; glycine biosynthesis; glycine from L-serine: step 1/1. Its function is as follows. Catalyzes the reversible interconversion of serine and glycine with tetrahydrofolate (THF) serving as the one-carbon carrier. This reaction serves as the major source of one-carbon groups required for the biosynthesis of purines, thymidylate, methionine, and other important biomolecules. Also exhibits THF-independent aldolase activity toward beta-hydroxyamino acids, producing glycine and aldehydes, via a retro-aldol mechanism. This is Serine hydroxymethyltransferase from Clavibacter sepedonicus (Clavibacter michiganensis subsp. sepedonicus).